The following is a 646-amino-acid chain: Long-chain fatty acid transport protein 1 (646 aa).

Over 1–13 the chain is Extracellular; sequence MRAPGAGSASVAS. Residues 14–34 form a helical membrane-spanning segment; the sequence is LVLLWLLGLPWTWSTAAALGV. Residues 35-646 lie on the Cytoplasmic side of the membrane; it reads YVGGGGWRFL…TRICSGAFAL (612 aa). Positions 191-475 are sufficient for oligomerization; sequence EMSGELGKSL…YISESATSKK (285 aa). Residue 246–257 coordinates AMP; sequence YIYTSGTTGLPK.

The protein belongs to the ATP-dependent AMP-binding enzyme family. In terms of assembly, self-associates. May function as a homodimer. Interacts with EPRS1; mediates the translocation of SLC27A1 from the cytoplasm to the plasma membrane thereby increasing the uptake of long-chain fatty acids. Interacts with DGAT2 and this interaction is enhanced in the presence of ZFYVE1.

The protein resides in the cell membrane. It is found in the endomembrane system. Its subcellular location is the cytoplasm. The catalysed reaction is a fatty acid(in) = a fatty acid(out). The enzyme catalyses (9Z)-octadecenoate(out) = (9Z)-octadecenoate(in). It carries out the reaction hexadecanoate(out) = hexadecanoate(in). It catalyses the reaction (5Z,8Z,11Z,14Z)-eicosatetraenoate(out) = (5Z,8Z,11Z,14Z)-eicosatetraenoate(in). The catalysed reaction is (9Z,12Z)-octadecadienoate(out) = (9Z,12Z)-octadecadienoate(in). The enzyme catalyses a long-chain fatty acid + ATP + CoA = a long-chain fatty acyl-CoA + AMP + diphosphate. It carries out the reaction (5Z,8Z,11Z,14Z)-eicosatetraenoate + ATP + CoA = (5Z,8Z,11Z,14Z)-eicosatetraenoyl-CoA + AMP + diphosphate. It catalyses the reaction a very long-chain fatty acid + ATP + CoA = a very long-chain fatty acyl-CoA + AMP + diphosphate. The catalysed reaction is tetracosanoate + ATP + CoA = tetracosanoyl-CoA + AMP + diphosphate. With respect to regulation, inhibited by Triacsin C. In terms of biological role, mediates the import of long-chain fatty acids (LCFA) into the cell by facilitating their transport at the plasma membrane. Also functions as an acyl-CoA ligase catalyzing the ATP-dependent formation of fatty acyl-CoA using LCFA and very-long-chain fatty acids (VLCFA) as substrates, which prevents fatty acid efflux from cells and might drive more fatty acid uptake. May act directly as a bona fide transporter, or alternatively, in a cytoplasmic or membrane-associated multimeric protein complex to trap and draw fatty acids towards accumulation. Plays a pivotal role in regulating available LCFA substrates from exogenous sources in tissues undergoing high levels of beta-oxidation or triglyceride synthesis. May be involved in regulation of cholesterol metabolism. Probably involved in fatty acid transport across the blood barrier. This Bos taurus (Bovine) protein is Long-chain fatty acid transport protein 1.